A 312-amino-acid chain; its full sequence is Malate dehydrogenase (312 aa).

Residues 7–13 (GAAGGIG) and aspartate 34 contribute to the NAD(+) site. Positions 81 and 87 each coordinate substrate. Residues asparagine 94 and 117-119 (ITN) contribute to the NAD(+) site. Substrate is bound by residues asparagine 119 and arginine 153. The active-site Proton acceptor is histidine 177. Residue methionine 227 participates in NAD(+) binding.

This sequence belongs to the LDH/MDH superfamily. MDH type 1 family. As to quaternary structure, homodimer.

The catalysed reaction is (S)-malate + NAD(+) = oxaloacetate + NADH + H(+). Functionally, catalyzes the reversible oxidation of malate to oxaloacetate. This Yersinia pseudotuberculosis serotype O:1b (strain IP 31758) protein is Malate dehydrogenase.